The following is a 160-amino-acid chain: 3-dehydroquinate dehydratase (160 aa).

The Proton acceptor role is filled by tyrosine 22. Residues asparagine 73, histidine 79, and aspartate 86 each contribute to the substrate site. The active-site Proton donor is the histidine 99. Substrate-binding positions include 100 to 101 (IS) and arginine 110.

This sequence belongs to the type-II 3-dehydroquinase family. Homododecamer.

The enzyme catalyses 3-dehydroquinate = 3-dehydroshikimate + H2O. Its pathway is metabolic intermediate biosynthesis; chorismate biosynthesis; chorismate from D-erythrose 4-phosphate and phosphoenolpyruvate: step 3/7. Functionally, catalyzes a trans-dehydration via an enolate intermediate. The polypeptide is 3-dehydroquinate dehydratase (Sulfurimonas denitrificans (strain ATCC 33889 / DSM 1251) (Thiomicrospira denitrificans (strain ATCC 33889 / DSM 1251))).